The primary structure comprises 380 residues: GDP-mannose:cellobiosyl-diphosphopolyprenol alpha-mannosyltransferase (380 aa).

The protein belongs to the glycosyltransferase group 1 family. Glycosyltransferase 4 subfamily.

It catalyses the reaction beta-D-Glc-(1-&gt;4)-alpha-D-Glc-di-trans,octa-cis-undecaprenyl diphosphate + GDP-alpha-D-mannose = alpha-D-Man-(1-&gt;3)-beta-D-Glc-(1-&gt;4)-alpha-D-Glc-1-di-trans,octa-cis-undecaprenyl diphosphate + GDP + H(+). Its function is as follows. Involved in the biosynthesis of the exopolysaccharide xanthan, a polymer that is comprised of repeating pentasaccharide units with the structure of a beta-(1,4)-linked D-glucose backbone with trisaccharide side chains composed of mannose-beta-(1,4)-glucuronic acid-beta-(1,2)-mannose attached to alternate glucose residues in the backbone by alpha-(1,3) linkages. Xanthan is involved in pathogenicity but has also been used in a variety of applications as a specialty polymer for commercial applications, including food additives, where they act as viscosifying, stabilizing, emulsifying, or gelling agents. The chain is GDP-mannose:cellobiosyl-diphosphopolyprenol alpha-mannosyltransferase (gumH) from Xanthomonas campestris.